We begin with the raw amino-acid sequence, 673 residues long: ATP-dependent DNA helicase Rep (673 aa).

The UvrD-like helicase ATP-binding domain occupies methionine 1 to serine 280. Residues alanine 22–threonine 29 and arginine 278 each bind ATP. The UvrD-like helicase C-terminal domain maps to glycine 281–glycine 562.

This sequence belongs to the helicase family. UvrD subfamily. In terms of assembly, homodimer in association with DNA.

The catalysed reaction is Couples ATP hydrolysis with the unwinding of duplex DNA by translocating in the 3'-5' direction.. It catalyses the reaction ATP + H2O = ADP + phosphate + H(+). Its activity is regulated as follows. Binding to DNA induces dimerization, which is required for DNA helicase activity. Helicase activity is stimulated by PriC. Its function is as follows. Rep helicase is a single-stranded (ss)DNA-dependent ATPase involved in DNA replication; it can initiate unwinding at a nick in the DNA. It binds to ssDNA and acts in a progressive fashion along the DNA in the 3' to 5' direction. Binds double-stranded (ds)DNA with a 5' ss- but not 3' ss-extension and forked structures with either lagging or leading ssDNA. Part of the PriC-Rep pathway for restart of stalled replication forks, which reloads the DnaB replicative helicase on sites other than the origin of replication. In Escherichia coli (strain K12), this protein is ATP-dependent DNA helicase Rep.